We begin with the raw amino-acid sequence, 983 residues long: MPNLEPAVVVPTSEAIAVDLTKLEEKLAPADSFLDRHLGPGETEQRQMLQTLGFDTLGDLIDQAVPPAIRFPRSLQLPASQSEYGAIAQLKSIASKNQVFRSYIGMGYYDTITPPVIQRNILENPGWYTAYTPYQAEIAQGRLEALLNFQTMVMDLTGLEIANASLLDEGTAAAEAMALSYGVSKSKANAFFVAQDCHPQTIEVIKTRANPLGIEVIVGDHHTFSFSTSIFGALLQYPATDGAVYDYRSFIDKAHQHQALVTLAADPLSLTLLTPPGELGADIAVGSTQRFGIPLGYGGPHAAYFATKAEYQRKMPGRIVGVSKDAHGNPALRLALQTREQHIRRDKATSNICTAQVLLAVMASMYGVYHGSTGLKNIALRIHQLTVLLAIGLKRLNYSLNNDYFFDTLRVGVGEQSAPAILKAAEGRGINLRPLVPGEVGISLDETVTVQDLLDLWQVFAGKDNLPFTPEELWSEVKTSFPADLTRQSLYLQDAVFNQYHSETELLRYLHQLESKDLALNTSMIPLGSCTMKLNATAEMMPVTWPEFGKIHPFAPAGQTEGYQILFAQLEAWLGEITGFDAISLQPNAGSQGEYAGLQVIRQYHLSRGEEQRNICLIPESAHGTNPASAVMCGMQVVPVKCDGEGNIDVEDLTSKAEKYGDRLAALMVTYPSTHGVFEATIGTICDIVHRFGGEVYMDGANMNAQVGLCRPADFGADVCHLNLHKTFCIPHGGGGPGMGPIGVKSHLQAFLPRTSLNSTAELQAEDQSIGMISAAPYGSASILVISWMYIAMMGPQGLTKATEVAILSANYMAKRLENYYPILFRGNNELVAHECILDLRPLKKQAAIEVEDVAKRLMDFGFHAPTVSWPVLGTMMVEPTESESLGELDRFCDAMIAIYQEAQAITHGEIDPADNPLKNAPHTAQSLICGEWNHPYSQEEAAYPAPWTKQFKFWPAVGRINNTYGDRHLVCSCEGMEAYKEG.

Lysine 726 bears the N6-(pyridoxal phosphate)lysine mark.

This sequence belongs to the GcvP family. As to quaternary structure, the glycine cleavage system is composed of four proteins: P, T, L and H. Requires pyridoxal 5'-phosphate as cofactor.

It catalyses the reaction N(6)-[(R)-lipoyl]-L-lysyl-[glycine-cleavage complex H protein] + glycine + H(+) = N(6)-[(R)-S(8)-aminomethyldihydrolipoyl]-L-lysyl-[glycine-cleavage complex H protein] + CO2. Its function is as follows. The glycine cleavage system catalyzes the degradation of glycine. The P protein binds the alpha-amino group of glycine through its pyridoxal phosphate cofactor; CO(2) is released and the remaining methylamine moiety is then transferred to the lipoamide cofactor of the H protein. The polypeptide is Glycine dehydrogenase (decarboxylating) (Synechocystis sp. (strain ATCC 27184 / PCC 6803 / Kazusa)).